The sequence spans 320 residues: Lipoyl synthase (320 aa).

A disordered region spans residues 1–26 (MVTVVDRVTSRRLRHPEKMHRPDTSI). Positions 59, 64, 70, 85, 89, 92, and 298 each coordinate [4Fe-4S] cluster. The region spanning 71–287 (WSQRHASFMI…AKIGKVKGFL (217 aa)) is the Radical SAM core domain.

The protein belongs to the radical SAM superfamily. Lipoyl synthase family. [4Fe-4S] cluster serves as cofactor.

Its subcellular location is the cytoplasm. The enzyme catalyses [[Fe-S] cluster scaffold protein carrying a second [4Fe-4S](2+) cluster] + N(6)-octanoyl-L-lysyl-[protein] + 2 oxidized [2Fe-2S]-[ferredoxin] + 2 S-adenosyl-L-methionine + 4 H(+) = [[Fe-S] cluster scaffold protein] + N(6)-[(R)-dihydrolipoyl]-L-lysyl-[protein] + 4 Fe(3+) + 2 hydrogen sulfide + 2 5'-deoxyadenosine + 2 L-methionine + 2 reduced [2Fe-2S]-[ferredoxin]. The protein operates within protein modification; protein lipoylation via endogenous pathway; protein N(6)-(lipoyl)lysine from octanoyl-[acyl-carrier-protein]: step 2/2. Catalyzes the radical-mediated insertion of two sulfur atoms into the C-6 and C-8 positions of the octanoyl moiety bound to the lipoyl domains of lipoate-dependent enzymes, thereby converting the octanoylated domains into lipoylated derivatives. The polypeptide is Lipoyl synthase (Bartonella quintana (strain Toulouse) (Rochalimaea quintana)).